Consider the following 479-residue polypeptide: FAD-dependent monooxygenase cdmI (479 aa).

FAD-binding residues include Glu-43, Gly-57, and Arg-116. Residues Asn-156 and Asn-198 are each glycosylated (N-linked (GlcNAc...) asparagine). Residues Asp-315 and Ala-328 each contribute to the FAD site. A helical transmembrane segment spans residues 453-473; it reads PFILAVLAGLGFLLTMFKQQW.

This sequence belongs to the paxM FAD-dependent monooxygenase family. FAD is required as a cofactor.

It localises to the membrane. The catalysed reaction is verruculide C + AH2 + O2 = verruculide C epoxide + A + H2O. It participates in secondary metabolite biosynthesis; terpenoid biosynthesis. FAD-dependent monooxygenase; part of the gene cluster that mediates the biosynthesis of chrodrimanin B, a meroterpenoid that acts as a potent blocker of insect GABA-gated chloride channels. The first step of the pathway is the biosynthesis of 6-hydroxymellein by the polyketide synthase cdmE. The prenyltransferase cdmH acts as a 6-hydroxymellein 5-farnesyltransferase and produces the hydrophobic metabolite verruculide C. The FAD-dependent monooxygenase cdmI further converts verruculide C into verruculide B. The terpene cyclase cdmG then produced the pentacyclic molecule 3-hydroxypentacecilide A, the backbone structure of chrodrimanin B, via folding the farnesyl moiety of the substrate into the chair-boat conformation. The short-chain dehydrogenase/reductase cdmF functions as the 3-OH dehydrogenase that oxidizes the C-3 hydroxyl group of 3-hydroxypentacecilide A and produces chrodrimanin C, the dehydrogenated product of 3-hydroxypentacecilide A. The cytochrome P450 monooxygenase cdmJ then accepts both 3-hydroxypentacecilide A and chrodrimanin C and functions as a C-7-beta-hydroxylase to produce respectively chrodrimanin H and chrodrimanin F. The dioxygenase cdmA accepts chrodrimanin H to afford chrodrimanin E, which is further transformed to chrodrimanin A by the dioxygenase cdmD. CdmA can also accept chrodrimanin C as substrate to convert it into verruculide A, which is further converted into chrodrimanin T by cdmD. The last step of the biosynthesis is proposed to be performed by the acetyltransferase cdmC which acetylates chrodrimanin A to yield chrodrimanin B. The pathway may also lead to the production of additional shunt products, including chrodrimanins T and U. In Talaromyces verruculosus (Penicillium verruculosum), this protein is FAD-dependent monooxygenase cdmI.